A 314-amino-acid polypeptide reads, in one-letter code: MLGLNGTPFQPATLQLTGIPGIQTGLTWVALIFCILYMISIVGNLSILTLVFWEPALHQPMYYFLSMLALNDLGVSFSTLPTVISTFCFNYNHVAFNACLVQMFFIHTFSFMESGILLAMSLDRFVAICYPLRYVTVLTHNRILAMGLGILTKSFTTLFPFPFVVKRLPFCKGNVLHHSYCLHPDLMKVACGDIHVNNIYGLLVIIFTYGMDSTFILLSYALILRAMLVIISQEQRLKALNTCMSHICAVLAFYVPIIAVSMIHRFWKSAPPVVHVMMSNVYLFVPPMLNPIIYSVKTKEIRKGILKFFHKSQA.

Residues 1-27 (MLGLNGTPFQPATLQLTGIPGIQTGLT) lie on the Extracellular side of the membrane. A helical membrane pass occupies residues 28–48 (WVALIFCILYMISIVGNLSIL). At 49–56 (TLVFWEPA) the chain is on the cytoplasmic side. A helical membrane pass occupies residues 57–77 (LHQPMYYFLSMLALNDLGVSF). The Extracellular segment spans residues 78-101 (STLPTVISTFCFNYNHVAFNACLV). Cysteines 99 and 191 form a disulfide. A helical membrane pass occupies residues 102–122 (QMFFIHTFSFMESGILLAMSL). The Cytoplasmic portion of the chain corresponds to 123–141 (DRFVAICYPLRYVTVLTHN). The chain crosses the membrane as a helical span at residues 142–162 (RILAMGLGILTKSFTTLFPFP). Residues 163–198 (FVVKRLPFCKGNVLHHSYCLHPDLMKVACGDIHVNN) lie on the Extracellular side of the membrane. The helical transmembrane segment at 199–219 (IYGLLVIIFTYGMDSTFILLS) threads the bilayer. The Cytoplasmic portion of the chain corresponds to 220-239 (YALILRAMLVIISQEQRLKA). Residues 240–260 (LNTCMSHICAVLAFYVPIIAV) form a helical membrane-spanning segment. The Extracellular segment spans residues 261–275 (SMIHRFWKSAPPVVH). The helical transmembrane segment at 276 to 296 (VMMSNVYLFVPPMLNPIIYSV) threads the bilayer. Residues 297 to 314 (KTKEIRKGILKFFHKSQA) lie on the Cytoplasmic side of the membrane.

It belongs to the G-protein coupled receptor 1 family.

The protein resides in the cell membrane. Its function is as follows. Odorant receptor. In Homo sapiens (Human), this protein is Olfactory receptor 51I1 (OR51I1).